The primary structure comprises 141 residues: Putative pre-16S rRNA nuclease (141 aa).

The protein belongs to the YqgF nuclease family.

It localises to the cytoplasm. Its function is as follows. Could be a nuclease involved in processing of the 5'-end of pre-16S rRNA. This chain is Putative pre-16S rRNA nuclease, found in Coxiella burnetii (strain RSA 331 / Henzerling II).